We begin with the raw amino-acid sequence, 1842 residues long: MAVRKLVPETAPVVDDAPASTSVDHKRSLAHKLLIELLSYQLALPVRWIETQNELLQWPETIQRYVEVGPRTTLVTMAKKTAARRASSQIVSASKLSTLKFLCTSDNTAEIYYEYPQESGAPVEEEGSKSDAAAPALAVSGSSRTATTAKATVTTPSSSSPETAPPAASTPSQGTPAGGSTTPDIPLSAKHVVLAMIAQKFRRAFDNIPTQKTVQELSGGKSTLQNEIMGDLAVEFGQLPDGGEYIPLDALGDALQGNFPGKPGKQMSSLITKLISRKMPGGFNQAAMQNHLEREWGFSKAHGQVVICLAITVEPESRLESADSAREFLDGLVSRYASYAGITMTPRGKGNVSADHSSAVMVDESVLNGIKREQRDYQIKELELLSKHLQLDTAADDAVLNELRASQKSLEEKLDRWASEFDDKFFSGIEAIFDARKVRQYDSWWNWAREDTMRLLSRMRPGQLPLQHLQEQGLVAQLLRRWEPSCAEIVQNFLDTGECKEPFLATAAEILRLGSDALKKSPVYRFTTPSMKPRTVISATGCVEYSEVPRENSSYIALLKQGLVAASGERVPYVHLKKKAPDQAWRYDAQSTEILLEALGTGSGAGLTFSGKTVLVTGAGPNSIGAAVVRGLLNGGAKVIVTTSRSVSSAASFFQRMYRECAARGATMAVVPFNQASKRDCESLVEYIYGAHSPVDGDLDYLVPFGAIPEKVELSKLDGASELAHRAMLVNILRILGLVYKEKEQRGLRTRPTTVIVPLSFNLGGFGGDGLYPESKIGLEALFNRYFSGNWSDYLSICGAAIGWVRGTTLSQSIRLLGEAIEHANGLDVITFSQEEMAFNILALMTPSIAETCEEGPVYADLTGGAKAIANIKDVMAAARAKFLKESSIQKALLAERAYEQRVLYGSESPRNDTSSPRPRLSTKRARLSLEFPEVPSKSDLKAHLVDLQGMVDLSRTVVVVGFSELGPWGNARTRWQMEHLTDLTPEGYIEMAWIMGLVEHFQGHLDGKPFVGWVDAQTKQPVADAEFKEKYQAHILAHAGLRFVEPDLLGGYDPSKKEFLQEIVVEEALPSFSTSKANADAFRLRLGDKVAVRRMPESDEYLVQVKRGAHFFVPKAVPFNRGVAGLLPAGWDPLRYGIPEDIVQQVDPVTLYALCCVSEALLSAGIRDPYELYRYIHVSELANCLGTGAGAQSAAQRLYKKRYLDHAVQSDILSESFLNTTAAWVNMLVFSSTGPIKTPVGACATAIESLDIGCDAIRSGRSQVALVGGYDDFREEASYEFAMMNATASSVGELAQGRLPREMSRPSTTTRGGFVESAGCGVQLIMNAELAIEMGLPIHAIIAYTQMAGDKIGRSIPAPGQGILTAARETSAGHDSALLDLAHRRKRLTDEVDAVHQWVTQQLAATRGPAGWPDRAIDEIEATALRKIKHAQHAWGNDIRCQDPSISPLKASLATWGLTIDDVQVVSMHGTSTKANDTNEADVISQQMDHLGRRPGNPLLAVCQKALTGHPKGAAGAWQLHGCMQMLQTGIVPGNRNADNIDSKLRQHRHIVYPMESMPMPQLKAAMLTSFGFGQKGGIAVVVAARHLFSAMAEDELEAYRRRVAKRQREADSAYVSGIMSKSLFKAKEVSVWGKSDASMSRMLLDPKARVGGHPENNNNNNNNSSSKRNTSIERLTRLLLPSQKPETEASPEGQQSTSLTASIQALLASQSTTRPTSTSIGVDVEAISSIPMGNAVFLERNFTRSERDHCFSSPTPQASFAGRWSAKEAVFKSLQTPSVGAGAAMAEIEIVSDGGVPKVQLHGRAKEVALAKGIRNIQASITHSGETVTAVALAESSPMC.

Residues 120-184 form a disordered region; it reads GAPVEEEGSK…TPAGGSTTPD (65 aa). Residues 140–175 are compositionally biased toward low complexity; that stretch reads SGSSRTATTAKATVTTPSSSSPETAPPAASTPSQGT. One can recognise a Carrier domain in the interval 184-262; sequence DIPLSAKHVV…DALQGNFPGK (79 aa). Ser222 is modified (O-(pantetheine 4'-phosphoryl)serine). Positions 611 to 807 are beta-ketoacyl reductase; the sequence is GKTVLVTGAG…CGAAIGWVRG (197 aa). Residues 1058-1585 form the Ketosynthase family 3 (KS3) domain; sequence KEFLQEIVVE…QKGGIAVVVA (528 aa). Active-site for beta-ketoacyl synthase activity residues include Cys1244, His1470, and His1511. The segment at 1649–1672 is disordered; that stretch reads KARVGGHPENNNNNNNNSSSKRNT. Positions 1658–1668 are enriched in low complexity; sequence NNNNNNNNSSS. The Mg(2+) site is built by Asp1725, Val1726, and Glu1727. Acetyl-CoA is bound by residues 1725 to 1727, Ser1761, 1770 to 1780, and 1823 to 1825; these read DVE, EAVFKSLQTPS, and ITH. Thr1824 and His1825 together coordinate Mg(2+).

Belongs to the thiolase-like superfamily. Fungal fatty acid synthetase subunit alpha family. In terms of assembly, [Alpha(6)beta(6)] hexamers of two multifunctional subunits (alpha and beta).

The catalysed reaction is acetyl-CoA + n malonyl-CoA + 2n NADPH + 4n H(+) = a long-chain-acyl-CoA + n CoA + n CO2 + 2n NADP(+).. It carries out the reaction a fatty acyl-[ACP] + malonyl-[ACP] + H(+) = a 3-oxoacyl-[ACP] + holo-[ACP] + CO2. It catalyses the reaction a (3R)-hydroxyacyl-[ACP] + NADP(+) = a 3-oxoacyl-[ACP] + NADPH + H(+). The protein operates within secondary metabolite biosynthesis. Functionally, fatty acid synthase alpha subunit; part of the gene cluster that mediates the biosynthesis of azaphilone pigments (MonAzPs), a complex mixture of compounds with a common azaphilone skeleton very widely used as food colorants. PigJ and pigK form the two subunits of a dedicated fungal fatty acid synthase (FAS) that produces the side chain fatty acyl moiety of MonAzPs, a beta-keto fatty acid. The chain length control of the pigJ-pigK FAS is somewhat flexible as MonAzPs features either a beta-ketooctanoic or a beta-ketodecanoic acid moiety. The beta-ketoacyl-ACP probably serves as the substrate for the acetyltransferase pigD that directly transfers the fatty acyl chain to the C-4 alcohol of the pyran ring. The first step of the pathway is performed by the nrPKS pigA that forms the hexaketide precursor from successive condensations of five malonyl-CoA units, with a simple acetyl-CoA starter unit. The role of esterase pigG is not clear, but it may play at most a supplementary role in the formation of the benzaldehyde produced by the pigA nrPKS. This very reactive benzaldehyde is intercepted by the pigC ketoreductase that to provide the first stable enzyme-free MonAzPs intermediate, 6-(4-hydroxy-2-oxopentyl)-3-methyl-2,4-dioxocyclohexane carbaldehyde, also known as M7PKS-1. The FAD-dependent monooxygenase pigN hydroxylates M7PKS-1 at C-4, which triggers the formation of the pyran ring. PigJ, pigK and pigD are involved in the acetylation of the pyran ring. PigJ and pigK form the two subunits of a dedicated fungal FAS that produces the side chain fatty acyl moiety of MonAzPs and pigD transfers the fatty acyl chain to the C-4 alcohol. PigM and pigO are involved in the elimination of the omega-1 alcohol. PigM acts as an O-acetyltransferase that synthesizes the putative O-11 acetyl intermediate whereas pigO eliminates acetic acid to yield an intermediate with a C10(11) double bond. The dehydration of the C-11 alcohol followed by the reduction of the C6(7) double bond by the NAD(P)H-dependent oxidoreductase pigE increases the electrophilicity of the C-5 ketone of the resulting acyl benzopyran. This in turn sets up the C-5 ketone for an intramolecular Knoevenagel aldol condensation with the C-20 enol of the side chain. This condensation affords the characteristic linear tricyclic carbon skeletons of the yellow pigments that serve as the common precursors for the classical yellow pigments monascin and ankaflavin, orange pigments rubopunctatin and monascorubrin, and red pigments ribropunctamine and monascorubramine. The FAD-dependent oxidoreductase pigF is especially invoved in the biosynthesis of orange and red pigments via desaturation of C6(7). The chain is Fatty acid synthase alpha subunit pigJ from Monascus ruber (Mold).